A 419-amino-acid chain; its full sequence is Keratin, type I cytoskeletal 47 kDa (419 aa).

The interval methionine 1 to asparagine 81 is head. A coil 1A region spans residues aspartate 82 to tryptophan 117. An IF rod domain is found at aspartate 82–leucine 397. The tract at residues tyrosine 118–isoleucine 139 is linker 1. Residues isoleucine 140–alanine 231 form a coil 1B region. Positions lysine 232–isoleucine 254 are linker 12. Positions leucine 255–glutamate 393 are coil 2. A tail region spans residues phenylalanine 394 to aspartate 419.

The protein belongs to the intermediate filament family. As to quaternary structure, heterotetramer of two type I and two type II keratins.

This chain is Keratin, type I cytoskeletal 47 kDa (xk81b2), found in Xenopus laevis (African clawed frog).